Here is a 332-residue protein sequence, read N- to C-terminus: Protoheme IX farnesyltransferase (332 aa).

Helical transmembrane passes span 63–83 (LICT…LNCL), 109–129 (TVFL…ISGV), 132–152 (LAAG…TIIL), 160–180 (IVFG…AATG), 188–208 (WLFS…AILL), 245–265 (ILGV…LLPF), and 286–306 (AKGL…LLLI).

It belongs to the UbiA prenyltransferase family. Protoheme IX farnesyltransferase subfamily.

The protein localises to the cell inner membrane. The enzyme catalyses heme b + (2E,6E)-farnesyl diphosphate + H2O = Fe(II)-heme o + diphosphate. Its pathway is porphyrin-containing compound metabolism; heme O biosynthesis; heme O from protoheme: step 1/1. Functionally, converts heme B (protoheme IX) to heme O by substitution of the vinyl group on carbon 2 of heme B porphyrin ring with a hydroxyethyl farnesyl side group. In Prochlorococcus marinus subsp. pastoris (strain CCMP1986 / NIES-2087 / MED4), this protein is Protoheme IX farnesyltransferase.